Reading from the N-terminus, the 844-residue chain is DNA mismatch repair protein MutS (844 aa).

602–609 (GPNMSGKS) contacts ATP.

The protein belongs to the DNA mismatch repair MutS family.

This protein is involved in the repair of mismatches in DNA. It is possible that it carries out the mismatch recognition step. This protein has a weak ATPase activity. The protein is DNA mismatch repair protein MutS of Streptococcus pneumoniae (strain ATCC 700669 / Spain 23F-1).